We begin with the raw amino-acid sequence, 301 residues long: Ornithine carbamoyltransferase (301 aa).

Carbamoyl phosphate contacts are provided by residues 53-56 (STRT), Gln80, Arg104, and 131-134 (HPCQ). Residues Asn162, Asp221, and 225 to 226 (SI) contribute to the L-ornithine site. Carbamoyl phosphate is bound by residues 260-261 (CL) and Arg288.

Belongs to the aspartate/ornithine carbamoyltransferase superfamily. OTCase family.

It localises to the cytoplasm. It catalyses the reaction carbamoyl phosphate + L-ornithine = L-citrulline + phosphate + H(+). It functions in the pathway amino-acid biosynthesis; L-arginine biosynthesis; L-arginine from L-ornithine and carbamoyl phosphate: step 1/3. Its function is as follows. Reversibly catalyzes the transfer of the carbamoyl group from carbamoyl phosphate (CP) to the N(epsilon) atom of ornithine (ORN) to produce L-citrulline. In Cenarchaeum symbiosum (strain A), this protein is Ornithine carbamoyltransferase.